A 313-amino-acid polypeptide reads, in one-letter code: Probable cell division protein WhiA (313 aa).

Residues 278-311 (SLKELGKLLDPPLSKSGVNHRLRRIKSIANEIRG) constitute a DNA-binding region (H-T-H motif).

It belongs to the WhiA family.

Its function is as follows. Involved in cell division and chromosome segregation. This Halothermothrix orenii (strain H 168 / OCM 544 / DSM 9562) protein is Probable cell division protein WhiA.